The sequence spans 415 residues: Histidine--tRNA ligase (415 aa).

This sequence belongs to the class-II aminoacyl-tRNA synthetase family. Homodimer.

Its subcellular location is the cytoplasm. It carries out the reaction tRNA(His) + L-histidine + ATP = L-histidyl-tRNA(His) + AMP + diphosphate + H(+). The polypeptide is Histidine--tRNA ligase (Clostridium botulinum (strain Kyoto / Type A2)).